Reading from the N-terminus, the 349-residue chain is Ion-translocating oxidoreductase complex subunit D (349 aa).

The next 3 helical transmembrane spans lie at 36–56 (CAFF…VALS), 77–99 (SAML…WMIV), and 124–144 (AMAA…SWIA). Residue Thr-185 is modified to FMN phosphoryl threonine. A run of 5 helical transmembrane segments spans residues 212–232 (GTGV…LVLL), 239–259 (WHIS…GFLL), 265–285 (ASPL…FIAT), 291–311 (ATSP…VYII), and 315–335 (GGYP…APFI).

Belongs to the NqrB/RnfD family. The complex is composed of six subunits: RnfA, RnfB, RnfC, RnfD, RnfE and RnfG. FMN serves as cofactor.

The protein resides in the cell inner membrane. Part of a membrane-bound complex that couples electron transfer with translocation of ions across the membrane. The polypeptide is Ion-translocating oxidoreductase complex subunit D (Shewanella sp. (strain ANA-3)).